A 187-amino-acid chain; its full sequence is Small ribosomal subunit protein uS7 (187 aa).

It belongs to the universal ribosomal protein uS7 family. As to quaternary structure, part of the 30S ribosomal subunit.

Its function is as follows. One of the primary rRNA binding proteins, it binds directly to 16S rRNA where it nucleates assembly of the head domain of the 30S subunit. Is located at the subunit interface close to the decoding center. This Picrophilus torridus (strain ATCC 700027 / DSM 9790 / JCM 10055 / NBRC 100828 / KAW 2/3) protein is Small ribosomal subunit protein uS7.